The primary structure comprises 590 residues: Arginine--tRNA ligase (590 aa).

The 'HIGH' region signature appears at 130-140; sequence ANPTGPMHVGH.

Belongs to the class-I aminoacyl-tRNA synthetase family. Monomer.

It is found in the cytoplasm. It carries out the reaction tRNA(Arg) + L-arginine + ATP = L-arginyl-tRNA(Arg) + AMP + diphosphate. This Methylobacterium nodulans (strain LMG 21967 / CNCM I-2342 / ORS 2060) protein is Arginine--tRNA ligase.